Consider the following 201-residue polypeptide: Recombination protein RecR (201 aa).

The segment at 60-75 (CSCCGNVDTIDPCTVC) adopts a C4-type zinc-finger fold. Residues 83–178 (SVIIVVEDVA…KITRLAHGVP (96 aa)) form the Toprim domain.

It belongs to the RecR family.

Its function is as follows. May play a role in DNA repair. It seems to be involved in an RecBC-independent recombinational process of DNA repair. It may act with RecF and RecO. The sequence is that of Recombination protein RecR from Sinorhizobium fredii (strain NBRC 101917 / NGR234).